Consider the following 245-residue polypeptide: Large ribosomal subunit protein uL29m (245 aa).

2 stretches are compositionally biased toward low complexity: residues 36–49 (SFNS…TSSS) and 234–245 (STKSETTTSKNI). 2 disordered regions span residues 36 to 98 (SFNS…NPDH) and 207 to 245 (RPSP…SKNI).

This sequence belongs to the universal ribosomal protein uL29 family. Component of the mitochondrial large ribosomal subunit. Mature mitochondrial ribosomes consist of a small (37S) and a large (54S) subunit. The 37S subunit contains at least 33 different proteins and 1 molecule of RNA (15S). The 54S subunit contains at least 45 different proteins and 1 molecule of RNA (21S).

It localises to the mitochondrion. This chain is Large ribosomal subunit protein uL29m (MRPL4), found in Coccidioides immitis (strain RS) (Valley fever fungus).